We begin with the raw amino-acid sequence, 293 residues long: Small ribosomal subunit biogenesis GTPase RsgA (293 aa).

One can recognise a CP-type G domain in the interval 63-223; the sequence is QNELVRPPVA…VADTPGFSAL (161 aa). GTP contacts are provided by residues 112–115 and 166–174; these read SKID and GQSGVGKSS. Zn(2+)-binding residues include cysteine 247, cysteine 252, histidine 254, and cysteine 260.

Belongs to the TRAFAC class YlqF/YawG GTPase family. RsgA subfamily. In terms of assembly, monomer. Associates with 30S ribosomal subunit, binds 16S rRNA. It depends on Zn(2+) as a cofactor.

Its subcellular location is the cytoplasm. Its function is as follows. One of several proteins that assist in the late maturation steps of the functional core of the 30S ribosomal subunit. Helps release RbfA from mature subunits. May play a role in the assembly of ribosomal proteins into the subunit. Circularly permuted GTPase that catalyzes slow GTP hydrolysis, GTPase activity is stimulated by the 30S ribosomal subunit. This chain is Small ribosomal subunit biogenesis GTPase RsgA, found in Geobacillus thermodenitrificans (strain NG80-2).